We begin with the raw amino-acid sequence, 357 residues long: MRPARALIDLQALRHNYQLAREHRGGKALAVIKADAYGHGAVRVAQALEAQADGFAVACIEEALELRAAGIRAPVLLLEGFFEADELALIVEHNFWTVVHSTWQLEAIEQAQLAKPLTVWLKIDTGMHRVGLYPHEYQAAYQRLLVTGKVARIVLMSHFARADELNSGCSDEQFAVFESFRKGLAAEISLKNSPAVLGWPHIPSDWSRPGIMLYGATPFGQAHPLADRLQPVMTLESKIISVRELPAGEAVGYGATFVCDRPLRIGVVAMGYADGYPRHAPTGTPVQIDGQPSRLLGRVSMDMLCVDLTGVPQAGLGSRVELWGKHVLASEVATRAETIPYEIFCNLRRVPRIYSQD.

K33 (proton acceptor; specific for D-alanine) is an active-site residue. K33 is subject to N6-(pyridoxal phosphate)lysine. R129 is a binding site for substrate. Y253 serves as the catalytic Proton acceptor; specific for L-alanine. Residue M301 participates in substrate binding.

The protein belongs to the alanine racemase family. The cofactor is pyridoxal 5'-phosphate.

It catalyses the reaction L-alanine = D-alanine. Its pathway is amino-acid biosynthesis; D-alanine biosynthesis; D-alanine from L-alanine: step 1/1. Catalyzes the interconversion of L-alanine and D-alanine. May also act on other amino acids. The polypeptide is Alanine racemase (alr) (Pseudomonas savastanoi pv. phaseolicola (strain 1448A / Race 6) (Pseudomonas syringae pv. phaseolicola (strain 1448A / Race 6))).